We begin with the raw amino-acid sequence, 429 residues long: Argininosuccinate lyase (429 aa).

Belongs to the lyase 1 family. Argininosuccinate lyase subfamily.

It is found in the cytoplasm. It catalyses the reaction 2-(N(omega)-L-arginino)succinate = fumarate + L-arginine. It participates in amino-acid biosynthesis; L-arginine biosynthesis; L-arginine from L-ornithine and carbamoyl phosphate: step 3/3. This Pyrobaculum aerophilum (strain ATCC 51768 / DSM 7523 / JCM 9630 / CIP 104966 / NBRC 100827 / IM2) protein is Argininosuccinate lyase.